We begin with the raw amino-acid sequence, 321 residues long: Lipoyl synthase (321 aa).

[4Fe-4S] cluster-binding residues include Cys-68, Cys-73, Cys-79, Cys-94, Cys-98, Cys-101, and Ser-308. Positions 80 to 297 (FNHGTATFMI…KAAAMDMGFT (218 aa)) constitute a Radical SAM core domain.

It belongs to the radical SAM superfamily. Lipoyl synthase family. The cofactor is [4Fe-4S] cluster.

It localises to the cytoplasm. The enzyme catalyses [[Fe-S] cluster scaffold protein carrying a second [4Fe-4S](2+) cluster] + N(6)-octanoyl-L-lysyl-[protein] + 2 oxidized [2Fe-2S]-[ferredoxin] + 2 S-adenosyl-L-methionine + 4 H(+) = [[Fe-S] cluster scaffold protein] + N(6)-[(R)-dihydrolipoyl]-L-lysyl-[protein] + 4 Fe(3+) + 2 hydrogen sulfide + 2 5'-deoxyadenosine + 2 L-methionine + 2 reduced [2Fe-2S]-[ferredoxin]. It functions in the pathway protein modification; protein lipoylation via endogenous pathway; protein N(6)-(lipoyl)lysine from octanoyl-[acyl-carrier-protein]: step 2/2. Functionally, catalyzes the radical-mediated insertion of two sulfur atoms into the C-6 and C-8 positions of the octanoyl moiety bound to the lipoyl domains of lipoate-dependent enzymes, thereby converting the octanoylated domains into lipoylated derivatives. The sequence is that of Lipoyl synthase from Erwinia tasmaniensis (strain DSM 17950 / CFBP 7177 / CIP 109463 / NCPPB 4357 / Et1/99).